The primary structure comprises 461 residues: Eukaryotic translation initiation factor 3 subunit M (461 aa).

Residues 42 to 61 (LLEPLRQQEQSDAEPDRKQR) are disordered. In terms of domain architecture, PCI spans 205-376 (DQELAQTHVV…SEFLVHRATY (172 aa)). A disordered region spans residues 422–461 (AAEEAAQGKSGDKKGDRRQRRDQPQQSQPAPEAATAVAAE). The span at 431 to 444 (SGDKKGDRRQRRDQ) shows a compositional bias: basic and acidic residues. The segment covering 445-461 (PQQSQPAPEAATAVAAE) has biased composition (low complexity).

It belongs to the eIF-3 subunit M family. Component of the eukaryotic translation initiation factor 3 (eIF-3) complex.

It localises to the cytoplasm. Component of the eukaryotic translation initiation factor 3 (eIF-3) complex, which is involved in protein synthesis of a specialized repertoire of mRNAs and, together with other initiation factors, stimulates binding of mRNA and methionyl-tRNAi to the 40S ribosome. The eIF-3 complex specifically targets and initiates translation of a subset of mRNAs involved in cell proliferation. This Aspergillus terreus (strain NIH 2624 / FGSC A1156) protein is Eukaryotic translation initiation factor 3 subunit M.